The sequence spans 681 residues: PWWP domain-containing DNA repair factor 3B (681 aa).

The span at 102 to 121 shows a compositional bias: polar residues; the sequence is NLSQESMSEEQPTATASENV. Disordered stretches follow at residues 102–144, 166–200, and 285–304; these read NLSQ…TQED, HTTGESMPSEMDTKATENLGCCQTDPSLADEDDKK, and QNQSSVESDVGAETSTAGCS. Ser-128 carries the phosphoserine modification. A compositionally biased stretch (polar residues) spans 285-302; sequence QNQSSVESDVGAETSTAG. The PWWP domain occupies 377–438; the sequence is TGMIVWFKYQ…KKYDCKEKQA (62 aa).

This sequence belongs to the PWWP3A family.

The chain is PWWP domain-containing DNA repair factor 3B (Pwwp3b) from Mus musculus (Mouse).